Consider the following 205-residue polypeptide: GTP cyclohydrolase-2 (205 aa).

49–53 (RLHSE) provides a ligand contact to GTP. Zn(2+) is bound by residues Cys54, Cys65, and Cys67. Residues Gln70, 92–94 (EGR), and Thr114 contribute to the GTP site. The active-site Proton acceptor is the Asp126. Arg128 functions as the Nucleophile in the catalytic mechanism. GTP contacts are provided by Thr149 and Lys154.

This sequence belongs to the GTP cyclohydrolase II family. Requires Zn(2+) as cofactor.

It carries out the reaction GTP + 4 H2O = 2,5-diamino-6-hydroxy-4-(5-phosphoribosylamino)-pyrimidine + formate + 2 phosphate + 3 H(+). Its pathway is cofactor biosynthesis; riboflavin biosynthesis; 5-amino-6-(D-ribitylamino)uracil from GTP: step 1/4. Catalyzes the conversion of GTP to 2,5-diamino-6-ribosylamino-4(3H)-pyrimidinone 5'-phosphate (DARP), formate and pyrophosphate. This Pseudomonas paraeruginosa (strain DSM 24068 / PA7) (Pseudomonas aeruginosa (strain PA7)) protein is GTP cyclohydrolase-2.